Reading from the N-terminus, the 297-residue chain is uncharacterized protein (297 aa).

Glutamate 46 is an active-site residue.

It belongs to the PhzF family. As to quaternary structure, homodimer and homotetramer.

This is an uncharacterized protein from Escherichia coli O157:H7.